Consider the following 196-residue polypeptide: Imidazole glycerol phosphate synthase subunit HisH (196 aa).

Residues 2 to 196 form the Glutamine amidotransferase type-1 domain; that stretch reads NIVIIDTNCS…QQLVKNFLEI (195 aa). Cysteine 77 (nucleophile) is an active-site residue. Catalysis depends on residues histidine 178 and glutamate 180.

In terms of assembly, heterodimer of HisH and HisF.

It is found in the cytoplasm. It carries out the reaction 5-[(5-phospho-1-deoxy-D-ribulos-1-ylimino)methylamino]-1-(5-phospho-beta-D-ribosyl)imidazole-4-carboxamide + L-glutamine = D-erythro-1-(imidazol-4-yl)glycerol 3-phosphate + 5-amino-1-(5-phospho-beta-D-ribosyl)imidazole-4-carboxamide + L-glutamate + H(+). The enzyme catalyses L-glutamine + H2O = L-glutamate + NH4(+). The protein operates within amino-acid biosynthesis; L-histidine biosynthesis; L-histidine from 5-phospho-alpha-D-ribose 1-diphosphate: step 5/9. IGPS catalyzes the conversion of PRFAR and glutamine to IGP, AICAR and glutamate. The HisH subunit catalyzes the hydrolysis of glutamine to glutamate and ammonia as part of the synthesis of IGP and AICAR. The resulting ammonia molecule is channeled to the active site of HisF. The protein is Imidazole glycerol phosphate synthase subunit HisH of Blochmanniella pennsylvanica (strain BPEN).